We begin with the raw amino-acid sequence, 766 residues long: FYVE, RhoGEF and PH domain-containing protein 4 (766 aa).

Disordered stretches follow at residues 1-20 (MEEIKPASASCVSKEKPSKV), 46-83 (NLNAPRTPGRHGLTTTPQQKLLSQHLPQRQGNDTDKTQ), and 134-188 (ETAT…ESPL). An actin filament-binding region spans residues 1 to 150 (MEEIKPASAS…SPTTDSCDGN (150 aa)). 2 stretches are compositionally biased toward polar residues: residues 58-83 (LTTTPQQKLLSQHLPQRQGNDTDKTQ) and 145-157 (DSCDGNASDSSYR). The span at 167–184 (LEERGAETETKVQERENG) shows a compositional bias: basic and acidic residues. Residues 206–393 (KLHKIANELL…STAASHSNSA (188 aa)) form the DH domain. One can recognise a PH 1 domain in the interval 422 to 521 (ELIKEGQILK…WIKALQETID (100 aa)). An FYVE-type zinc finger spans residues 559 to 619 (DNEVTMCMKC…VCKDCYQIIS (61 aa)). Zn(2+) is bound by residues cysteine 565, cysteine 568, cysteine 582, cysteine 585, cysteine 590, cysteine 593, cysteine 611, and cysteine 614. One can recognise a PH 2 domain in the interval 643-740 (NSVVCSFLQY…WLKVILLAVT (98 aa)). Phosphoserine occurs at positions 702 and 716. The interval 742-766 (ETPGGPNEHPATLDDHPEPKKKSEC) is disordered. Residues 752–766 (ATLDDHPEPKKKSEC) show a composition bias toward basic and acidic residues.

As to quaternary structure, homooligomer. Expressed in different tissues, including brain, cerebellum, peripheral nerve, skeletal muscle, heart, uterus, placenta and testis.

The protein localises to the cytoplasm. Its subcellular location is the cytoskeleton. It is found in the cell projection. It localises to the filopodium. In terms of biological role, activates CDC42, a member of the Ras-like family of Rho- and Rac proteins, by exchanging bound GDP for free GTP. Plays a role in regulating the actin cytoskeleton and cell shape. Activates MAPK8. This chain is FYVE, RhoGEF and PH domain-containing protein 4 (FGD4), found in Homo sapiens (Human).